A 143-amino-acid chain; its full sequence is Snake venom vascular endothelial growth factor toxin (143 aa).

The signal sequence occupies residues 1–24 (MAAYLLAVAILFCIQGWPSATVQG). The residue at position 25 (Gln25) is a Pyrrolidone carboxylic acid. 3 disulfides stabilise this stretch: Cys38/Cys80, Cys69/Cys115, and Cys73/Cys117. Residues 115–143 (CECRPRSPGDVNNGRNPEEGEPRARFPFV) are disordered. A compositionally biased stretch (basic and acidic residues) spans 130–143 (NPEEGEPRARFPFV).

This sequence belongs to the PDGF/VEGF growth factor family. Snake venom VEGF subfamily. In terms of assembly, homodimer; disulfide-linked. Interacts with VEGF receptor-2 (KDR). In terms of processing, the N-terminus is blocked for N-terminal sequencing, suggesting a Pyrrolidone carboxylic acid at Gln-25. In terms of tissue distribution, expressed by the venom gland.

Its subcellular location is the secreted. In terms of biological role, snake venom VEGFs that may contribute to venom dispersion and prey subjugation by inducing vascular permeability and hypotension. This protein induces an increase in capillary permeability when intradermally injected into mice. Also provokes a drastic hypotensive effect after intravenous injection. The hypotension is mediated by nitric oxide (NO), which is produced by VEGF-activated endothelium NO synthase. Also induces angiogenesis in vitro. Unlike other crotalid VEGFs, this protein interacts with VEGF receptor-2 (KDR) with a high affinity (Kd=413 pM), whereas no interaction is detected with VEGF receptor-1 (FLT1). This chain is Snake venom vascular endothelial growth factor toxin, found in Protobothrops jerdonii (Jerdon's pitviper).